The following is a 148-amino-acid chain: Protein NrdI (148 aa).

This sequence belongs to the NrdI family.

Probably involved in ribonucleotide reductase function. This Corynebacterium glutamicum (strain R) protein is Protein NrdI.